The chain runs to 293 residues: Probable porphobilinogen deaminase (293 aa).

Cys-233 carries the post-translational modification S-(dipyrrolylmethanemethyl)cysteine.

Belongs to the HMBS family. Dipyrromethane serves as cofactor.

The catalysed reaction is 4 porphobilinogen + H2O = hydroxymethylbilane + 4 NH4(+). The protein operates within porphyrin-containing compound metabolism; protoporphyrin-IX biosynthesis; coproporphyrinogen-III from 5-aminolevulinate: step 2/4. Functionally, tetrapolymerization of the monopyrrole PBG into the hydroxymethylbilane pre-uroporphyrinogen in several discrete steps. This is Probable porphobilinogen deaminase from Saccharolobus islandicus (strain M.16.27) (Sulfolobus islandicus).